A 501-amino-acid polypeptide reads, in one-letter code: Ribonuclease Y (501 aa).

The chain crosses the membrane as a helical span at residues 7 to 27 (LVVIALLGALTLLTAGHVLAL). The KH domain occupies 190–256 (VVRAVPLPEE…RLTLEKLVAD (67 aa)). The 94-residue stretch at 316-409 (VLAHLVESAH…TQAADAISGG (94 aa)) folds into the HD domain.

This sequence belongs to the RNase Y family.

Its subcellular location is the cell membrane. Endoribonuclease that initiates mRNA decay. The chain is Ribonuclease Y from Thermobifida fusca (strain YX).